The sequence spans 377 residues: Nuclear pore complex protein NUP54 (377 aa).

Residues Met1–Pro18 are compositionally biased toward low complexity. The segment at Met1 to Pro104 is disordered. Repeat copies occupy residues Phe2–Gly3, Phe11–Gly12, Phe20–Gly21, Phe27–Gly28, Phe36–Gly37, Phe49–Gly50, and Phe87–Gly88. The segment at Phe2–Gly88 is 7 X 2 AA repeats of F-G. Residues Ala19–Ala32 show a composition bias toward polar residues. The span at Pro39–Pro104 shows a compositional bias: low complexity.

It belongs to the NUP54 family. In terms of assembly, part of the nuclear pore complex (NPC). The NPC has an eight-fold symmetrical structure comprising a central transport channel and two rings, the cytoplasmic and nuclear rings, to which eight filaments are attached. The cytoplasmic filaments have loose ends, while the nuclear filaments are joined in a distal ring, forming a nuclear basket. NPCs are highly dynamic in configuration and composition, and can be devided in 3 subcomplexes, the NUP62 subcomplex, the NUP107-160 subcomplex and the NUP93 subcomplex, containing approximately 30 different nucleoporin proteins.

It is found in the nucleus envelope. The protein resides in the nucleus. Its subcellular location is the nuclear pore complex. This chain is Nuclear pore complex protein NUP54, found in Arabidopsis thaliana (Mouse-ear cress).